We begin with the raw amino-acid sequence, 271 residues long: High mobility group protein homolog TDP-1 (271 aa).

Residues G8–Q63 form the DEK-C domain. Residues L75 to P118 form a disordered region. Residues S101–D116 show a composition bias toward basic and acidic residues. DNA-binding regions (HMG box) lie at residues P118–K186 and P206–P270.

Its subcellular location is the nucleus. Unknown. May play a role in transcription and/or DNA replication. It is not known whether this protein is DNA sequence binding-specific or not. The sequence is that of High mobility group protein homolog TDP-1 from Trypanosoma brucei rhodesiense.